The primary structure comprises 193 residues: Xanthine phosphoribosyltransferase (193 aa).

2 residues coordinate xanthine: leucine 20 and threonine 27. Alanine 128–alanine 132 serves as a coordination point for 5-phospho-alpha-D-ribose 1-diphosphate. Lysine 156 is a binding site for xanthine.

The protein belongs to the purine/pyrimidine phosphoribosyltransferase family. Xpt subfamily. In terms of assembly, homodimer.

The protein resides in the cytoplasm. The enzyme catalyses XMP + diphosphate = xanthine + 5-phospho-alpha-D-ribose 1-diphosphate. The protein operates within purine metabolism; XMP biosynthesis via salvage pathway; XMP from xanthine: step 1/1. Converts the preformed base xanthine, a product of nucleic acid breakdown, to xanthosine 5'-monophosphate (XMP), so it can be reused for RNA or DNA synthesis. In Streptococcus pneumoniae (strain P1031), this protein is Xanthine phosphoribosyltransferase.